The chain runs to 134 residues: Profilin-3 (134 aa).

C13 and C118 are joined by a disulfide. The Involved in PIP2 interaction motif lies at 84–100 (AVIRGKKGSGGITIKKT). Phosphothreonine is present on T114.

The protein belongs to the profilin family. As to quaternary structure, occurs in many kinds of cells as a complex with monomeric actin in a 1:1 ratio. Phosphorylated by MAP kinases.

It localises to the cytoplasm. The protein localises to the cytoskeleton. In terms of biological role, binds to actin and affects the structure of the cytoskeleton. At high concentrations, profilin prevents the polymerization of actin, whereas it enhances it at low concentrations. The sequence is that of Profilin-3 from Olea europaea (Common olive).